The following is a 141-amino-acid chain: Perlwapin-like protein (141 aa).

The signal sequence occupies residues 1-19 (MNVYFILFLGVFAFIEVNC). The WAP domain maps to 23–71 (KSKSLGTCPKLDVSTVCVVDYKFNCLFQKQCPSGYRCCTYGCNRRCAAV). 6 cysteine pairs are disulfide-bonded: C30-C60, C39-C64, C47-C59, C53-C68, C81-C105, and C92-C104.

Component of the organic matrix of calcified shell layers like nacre and prisms.

The protein resides in the secreted. The polypeptide is Perlwapin-like protein (Mytilus galloprovincialis (Mediterranean mussel)).